An 833-amino-acid polypeptide reads, in one-letter code: pre-rRNA 2'-O-ribose RNA methyltransferase (833 aa).

S-adenosyl-L-methionine contacts are provided by G57, W59, D77, D93, and D118. Residue K158 is the Proton acceptor of the active site. Disordered stretches follow at residues 323 to 349 (KLDN…MEEN), 363 to 453 (KKKR…DEYL), 475 to 640 (LDDV…SDED), 730 to 767 (LGKK…SGTD), and 779 to 833 (IAKK…KNKK). The stretch at 336-386 (EEKKELTAEEMEENLQEEMKEYLALVEKKKRKEKKRQNELKRKHQRKIELT) forms a coiled coil. A compositionally biased stretch (basic residues) spans 363 to 381 (KKKRKEKKRQNELKRKHQR). Basic and acidic residues predominate over residues 382 to 396 (KIELTMHIPGDKIEE). Residues 423-441 (SSDEFDSDDSDDDDDDDNN) are compositionally biased toward acidic residues. Residues 455–485 (QQLDEQYKLYQQRIRKKAAKLDDVKVKKDKI) adopt a coiled-coil conformation. Residues 475-486 (LDDVKVKKDKIG) show a composition bias toward basic and acidic residues. 2 stretches are compositionally biased toward acidic residues: residues 490 to 503 (YNED…EQEE) and 542 to 556 (SESE…DQDD). Basic and acidic residues predominate over residues 557–566 (ENNKPIDISK). Composition is skewed to acidic residues over residues 605 to 614 (DKDDQDDDDD) and 626 to 640 (PVQE…SDED). Composition is skewed to basic and acidic residues over residues 732–741 (KKMEKTRDKA), 751–767 (SNRE…SGTD), and 794–806 (KIVD…DLRA).

It belongs to the class I-like SAM-binding methyltransferase superfamily. RNA methyltransferase RlmE family. SPB1 subfamily.

It localises to the nucleus. The protein localises to the nucleolus. The catalysed reaction is a ribonucleotide in rRNA + S-adenosyl-L-methionine = a 2'-O-methylribonucleotide in rRNA + S-adenosyl-L-homocysteine + H(+). Functionally, RNA 2'-O-methyltransferase involved in the maturation of rRNA and in the biogenesis of ribosomal subunits. This Dictyostelium discoideum (Social amoeba) protein is pre-rRNA 2'-O-ribose RNA methyltransferase (fsjC).